A 295-amino-acid chain; its full sequence is Ribosomal RNA small subunit methyltransferase A (295 aa).

Asn-29, Leu-31, Gly-56, Glu-77, Asp-102, and Asn-128 together coordinate S-adenosyl-L-methionine.

Belongs to the class I-like SAM-binding methyltransferase superfamily. rRNA adenine N(6)-methyltransferase family. RsmA subfamily.

It is found in the cytoplasm. The catalysed reaction is adenosine(1518)/adenosine(1519) in 16S rRNA + 4 S-adenosyl-L-methionine = N(6)-dimethyladenosine(1518)/N(6)-dimethyladenosine(1519) in 16S rRNA + 4 S-adenosyl-L-homocysteine + 4 H(+). Specifically dimethylates two adjacent adenosines (A1518 and A1519) in the loop of a conserved hairpin near the 3'-end of 16S rRNA in the 30S particle. May play a critical role in biogenesis of 30S subunits. In Listeria innocua serovar 6a (strain ATCC BAA-680 / CLIP 11262), this protein is Ribosomal RNA small subunit methyltransferase A.